Reading from the N-terminus, the 3432-residue chain is Genome polyprotein (3432 aa).

The interaction with host EXOC1 stretch occupies residues 2-15; it reads TKKPGGPGKNRAIN. Topologically, residues 2–109 are cytoplasmic; sequence TKKPGGPGKN…RKQNKRGGNE (108 aa). Residues 37–72 are hydrophobic; homodimerization of capsid protein C; sequence LLDGRGPVRFVLALITFFKFTALAPTKALLGRWKAV. Positions 106 to 127 are cleaved as a propeptide — ER anchor for the capsid protein C, removed in mature form by serine protease NS3; the sequence is GGNEGSIMWLASLAVVIACAGA. A helical membrane pass occupies residues 110-130; the sequence is GSIMWLASLAVVIACAGAMKL. Topologically, residues 131 to 253 are extracellular; sequence SNFQGKLLMT…ATRYLMKTEN (123 aa). Residue Asn142 is glycosylated (N-linked (GlcNAc...) asparagine; by host). The chain crosses the membrane as a helical span at residues 254 to 274; sequence WIIRNPGYAFLAAVLGWMLGS. Topologically, residues 275–279 are cytoplasmic; that stretch reads NNGQR. A helical membrane pass occupies residues 280–294; that stretch reads VVFTILLLLVAPAYS. At 295 to 746 the chain is on the extracellular side; it reads FNCLGMGNRD…QVFGGAFRTL (452 aa). 6 disulfides stabilise this stretch: Cys297–Cys324, Cys354–Cys410, Cys354–Cys415, Cys368–Cys399, Cys386–Cys410, and Cys386–Cys415. Residues 392 to 405 form a fusion peptide region; it reads DRGWGNGCGLFGKG. N-linked (GlcNAc...) asparagine; by host glycosylation occurs at Asn448. 2 cysteine pairs are disulfide-bonded: Cys484-Cys581 and Cys598-Cys629. The helical transmembrane segment at 747 to 767 threads the bilayer; sequence FGGMSWITQGLMGALLLWMGV. Topologically, residues 768–773 are cytoplasmic; that stretch reads NARDRS. Residues 774 to 794 form a helical membrane-spanning segment; it reads IALAFLATGGVLVFLATNVHA. Topologically, residues 795-1219 are extracellular; sequence DTGCAIDITR…AFAEANSGGD (425 aa). 6 disulfides stabilise this stretch: Cys798/Cys809, Cys849/Cys937, Cys973/Cys1017, Cys1074/Cys1123, Cys1085/Cys1106, and Cys1107/Cys1110. Asn924 and Asn1001 each carry an N-linked (GlcNAc...) asparagine; by host glycan. A helical membrane pass occupies residues 1220–1240; the sequence is VLHLALIAVFKIQPAFLVMNM. Residues 1241–1250 lie on the Cytoplasmic side of the membrane; it reads LSTRWTNQEN. A helical membrane pass occupies residues 1251–1271; that stretch reads VILVLGAAFFQLASVDLQIGV. A topological domain (lumenal) is located at residue His1272. The helical transmembrane segment at 1273–1293 threads the bilayer; the sequence is GILNAAAIAWMIVRAITFPTT. Residues 1294–1309 lie on the Cytoplasmic side of the membrane; sequence SSVTMPVLALLTPGMR. The chain crosses the membrane as a helical span at residues 1310 to 1330; the sequence is ALYLDTYRIILLVIGICSLLH. Over 1331 to 1341 the chain is Lumenal; sequence ERKKTMAKKKG. Residues 1342–1362 traverse the membrane as a helical segment; it reads AVLLGLALTSTGWFSPTTIAA. At 1363 to 1374 the chain is on the cytoplasmic side; that stretch reads GLMVCNPNKKRG. Interaction with human SPCS1 stretches follow at residues 1374–1423 and 1458–1505; these read GWPA…GKAT and FHLI…TKRG. Residues 1375-1395 form a helical membrane-spanning segment; the sequence is WPATEFLSAVGLMFAIVGGLA. The Lumenal portion of the chain corresponds to 1396–1398; that stretch reads ELD. The helical transmembrane segment at 1399-1419 threads the bilayer; it reads IESMSIPFMLAGLMAVSYVVS. At 1420–1476 the chain is on the cytoplasmic side; it reads GKATDMWLERAADISWEMDAAITGSSRRLDVKLDDDGDFHLIDDPGVPWKVWVLRMS. Positions 1427–1466 are interacts with and activates NS3 protease; sequence LERAADISWEMDAAITGSSRRLDVKLDDDGDFHLIDDPGV. An intramembrane region (helical) is located at residues 1477 to 1497; it reads CIGLAALTPWAIVPAAFGYWL. At 1498-2173 the chain is on the cytoplasmic side; that stretch reads TLKTTKRGGV…RMALEELPDA (676 aa). A Peptidase S7 domain is found at 1505–1682; sequence GGVFWDTPSP…DRQEEPVPEA (178 aa). Residues His1555, Asp1579, and Ser1639 each act as charge relay system; for serine protease NS3 activity in the active site. Residues 1685–1841 form the Helicase ATP-binding domain; that stretch reads PNMLRKRQMT…DSNAPIHDLQ (157 aa). Residues 1689 to 1692 are important for RNA-binding; that stretch reads RKRQ. Residue 1698-1705 participates in ATP binding; the sequence is LHPGSGKT. The DEAH box signature appears at 1789–1792; sequence DEAH. Positions 1852–2017 constitute a Helicase C-terminal domain; it reads GYEWITEYAG…GLVAQLYGPE (166 aa). Lys1893 is subject to N6-acetyllysine; by host. A disordered region spans residues 1950–1972; that stretch reads NPSPITSASAAQRRGRVGRNPNQ. The regulates the ATPase activity of NS3 helicase stretch occupies residues 2168-2172; that stretch reads EELPD. Residues 2174-2194 traverse the membrane as a helical segment; sequence LETITLIVAITVMTGGFFLLM. The Lumenal segment spans residues 2195-2199; the sequence is MQRKG. The helical intramembrane region spans 2200–2220; sequence IGKMGLGALVLTLATFFLWAA. Residue Glu2221 is a topological domain, lumenal. The helical transmembrane segment at 2222–2242 threads the bilayer; sequence VPGTKIAGTLLIALLLMVVLI. At 2243–2257 the chain is on the cytoplasmic side; it reads PEPEKQRSQTDNQLA. Residues 2258–2278 form a helical membrane-spanning segment; that stretch reads VFLICVLTVVGVVAANEYGML. Topologically, residues 2279–2311 are lumenal; sequence EKTKADLKSMFGGKTQASGLTGLPSMALDLRPA. An intramembrane region (helical) is located at residues 2312-2332; it reads TAWALYGGSTVVLTPLLKHLI. At 2333–2368 the chain is on the lumenal side; sequence TSEYVTTSLASINSQAGSLFVLPRGVPFTDLDLTVG. The helical transmembrane segment at 2369-2389 threads the bilayer; sequence LVFLGCWGQITLTTFLTAMVL. At 2390 to 2444 the chain is on the cytoplasmic side; that stretch reads ATLHYGYMLPGWQAEALRAAQRRTAAGIMKNAVVDGMVATDVPELERTTPLMQKK. Residues 2445 to 2465 form a helical membrane-spanning segment; that stretch reads VGQVLLIGVSVAAFLVNPNVT. Topologically, residues 2466–2469 are lumenal; it reads TVRE. The helical transmembrane segment at 2470 to 2490 threads the bilayer; that stretch reads AGVLVTAATLTLWDNGASAVW. Over 2491–3432 the chain is Cytoplasmic; that stretch reads NSTTATGLCH…DVLIQEDRVI (942 aa). The region spanning 2528–2793 is the mRNA cap 0-1 NS5-type MT domain; that stretch reads GRPGGRTLGE…DVNLGSGTRA (266 aa). Residue Ser2583 participates in S-adenosyl-L-methionine binding. Ser2583 bears the Phosphoserine mark. Catalysis depends on Lys2588, which acts as the For 2'-O-MTase activity. S-adenosyl-L-methionine contacts are provided by Gly2613, Trp2614, Thr2631, Lys2632, Asp2658, and Val2659. The For 2'-O-MTase activity role is filled by Asp2673. S-adenosyl-L-methionine is bound at residue Ile2674. Catalysis depends on for 2'-O-MTase activity residues Lys2709 and Glu2745. Tyr2747 lines the S-adenosyl-L-methionine pocket. Residues Glu2967, His2971, Cys2976, and Cys2979 each contribute to the Zn(2+) site. The RdRp catalytic domain maps to 3057–3209; the sequence is GKMYADDTAG…KPLDDRFATA (153 aa). Positions 3244, 3260, and 3379 each coordinate Zn(2+).

The protein in the N-terminal section; belongs to the class I-like SAM-binding methyltransferase superfamily. mRNA cap 0-1 NS5-type methyltransferase family. Homodimer. Interacts (via N-terminus) with host EXOC1 (via C-terminus); this interaction results in EXOC1 degradation through the proteasome degradation pathway. In terms of assembly, forms heterodimers with envelope protein E in the endoplasmic reticulum and Golgi. As to quaternary structure, homodimer; in the endoplasmic reticulum and Golgi. Interacts with protein prM. Interacts with non-structural protein 1. Interacts with host HSPA5. Homodimer; Homohexamer when secreted. Interacts with envelope protein E. NS1 interacts with NS4B. Interacts with host complement protein CFH; this interaction leads to the degradation of C3. In terms of assembly, interacts (via N-terminus) with serine protease NS3. As to quaternary structure, forms a heterodimer with serine protease NS3. May form homooligomers. Interacts with human SPCS1. Forms a heterodimer with NS2B. Interacts with non-structural protein 2A (via N-terminus). Interacts with NS4B. Interacts with unphosphorylated RNA-directed RNA polymerase NS5; this interaction stimulates RNA-directed RNA polymerase NS5 guanylyltransferase activity. Interacts with host ILF2. In terms of assembly, interacts with serine protease NS3. As to quaternary structure, homodimer. Interacts with host STAT2; this interaction inhibits the phosphorylation of the latter, and, when all viral proteins are present (polyprotein), targets STAT2 for degradation. Interacts with serine protease NS3. Mn(2+) is required as a cofactor. It depends on Mg(2+) as a cofactor. In terms of processing, specific enzymatic cleavages in vivo yield mature proteins. Cleavages in the lumen of endoplasmic reticulum are performed by host signal peptidase, whereas cleavages in the cytoplasmic side are performed by serine protease NS3. Signal cleavage at the 2K-4B site requires a prior NS3 protease-mediated cleavage at the 4A-2K site. Cleaved in post-Golgi vesicles by a host furin, releasing the mature small envelope protein M, and peptide pr. This cleavage is incomplete as up to 30% of viral particles still carry uncleaved prM. Post-translationally, N-glycosylated. In terms of processing, N-glycosylated. The excreted form is glycosylated and this is required for efficient secretion of the protein from infected cells. Acetylated by host KAT5. Acetylation modulates NS3 RNA-binding and unwinding activities and plays an important positive role for viral replication. Post-translationally, phosphorylated on serines residues. This phosphorylation may trigger NS5 nuclear localization.

The protein localises to the host endoplasmic reticulum membrane. Its subcellular location is the virion. It localises to the host nucleus. The protein resides in the host cytoplasm. It is found in the host perinuclear region. The protein localises to the secreted. Its subcellular location is the virion membrane. It localises to the host cell surface. The catalysed reaction is Selective hydrolysis of -Xaa-Xaa-|-Yaa- bonds in which each of the Xaa can be either Arg or Lys and Yaa can be either Ser or Ala.. It catalyses the reaction RNA(n) + a ribonucleoside 5'-triphosphate = RNA(n+1) + diphosphate. It carries out the reaction a ribonucleoside 5'-triphosphate + H2O = a ribonucleoside 5'-diphosphate + phosphate + H(+). The enzyme catalyses ATP + H2O = ADP + phosphate + H(+). The catalysed reaction is a 5'-end (5'-triphosphoguanosine)-ribonucleoside in mRNA + S-adenosyl-L-methionine = a 5'-end (N(7)-methyl 5'-triphosphoguanosine)-ribonucleoside in mRNA + S-adenosyl-L-homocysteine. It catalyses the reaction a 5'-end (N(7)-methyl 5'-triphosphoguanosine)-ribonucleoside in mRNA + S-adenosyl-L-methionine = a 5'-end (N(7)-methyl 5'-triphosphoguanosine)-(2'-O-methyl-ribonucleoside) in mRNA + S-adenosyl-L-homocysteine + H(+). Its function is as follows. Plays a role in virus budding by binding to the cell membrane and gathering the viral RNA into a nucleocapsid that forms the core of a mature virus particle. During virus entry, may induce genome penetration into the host cytoplasm after hemifusion induced by the surface proteins. Can migrate to the cell nucleus where it modulates host functions. Overcomes the anti-viral effects of host EXOC1 by sequestering and degrading the latter through the proteasome degradation pathway. Inhibits RNA silencing by interfering with host Dicer. Functionally, prevents premature fusion activity of envelope proteins in trans-Golgi by binding to envelope protein E at pH 6.0. After virion release in extracellular space, gets dissociated from E dimers. In terms of biological role, acts as a chaperone for envelope protein E during intracellular virion assembly by masking and inactivating envelope protein E fusion peptide. prM is the only viral peptide matured by host furin in the trans-Golgi network probably to avoid catastrophic activation of the viral fusion activity in acidic Golgi compartment prior to virion release. prM-E cleavage is inefficient, and many virions are only partially matured. These uncleaved prM would play a role in immune evasion. Its function is as follows. May play a role in virus budding. Exerts cytotoxic effects by activating a mitochondrial apoptotic pathway through M ectodomain. May display a viroporin activity. Binds to host cell surface receptor and mediates fusion between viral and cellular membranes. Efficient virus attachment to cell is, at least in part, mediated by host HSPA5. Envelope protein is synthesized in the endoplasmic reticulum in the form of heterodimer with protein prM. They play a role in virion budding in the ER, and the newly formed immature particle is covered with 60 spikes composed of heterodimer between precursor prM and envelope protein E. The virion is transported to the Golgi apparatus where the low pH causes dissociation of PrM-E heterodimers and formation of E homodimers. prM-E cleavage is inefficient, and many virions are only partially matured. These uncleaved prM would play a role in immune evasion. Functionally, involved in immune evasion, pathogenesis and viral replication. Once cleaved off the polyprotein, is targeted to three destinations: the viral replication cycle, the plasma membrane and the extracellular compartment. Essential for viral replication. Required for formation of the replication complex and recruitment of other non-structural proteins to the ER-derived membrane structures. Excreted as a hexameric lipoparticle that plays a role against host immune response. Antagonizing the complement function. Binds to the host macrophages and dendritic cells. Inhibits signal transduction originating from Toll-like receptor 3 (TLR3). In terms of biological role, component of the viral RNA replication complex that functions in virion assembly and antagonizes the host alpha/beta interferon antiviral response. Its function is as follows. Required cofactor for the serine protease function of NS3. May have membrane-destabilizing activity and form viroporins. Displays three enzymatic activities: serine protease, NTPase and RNA helicase. NS3 serine protease, in association with NS2B, performs its autocleavage and cleaves the polyprotein at dibasic sites in the cytoplasm: C-prM, NS2A-NS2B, NS2B-NS3, NS3-NS4A, NS4A-2K and NS4B-NS5. NS3 RNA helicase binds RNA and unwinds dsRNA in the 3' to 5' direction. Functionally, regulates the ATPase activity of the NS3 helicase activity. NS4A allows NS3 helicase to conserve energy during unwinding. In terms of biological role, functions as a signal peptide for NS4B and is required for the interferon antagonism activity of the latter. Its function is as follows. Induces the formation of ER-derived membrane vesicles where the viral replication takes place. Inhibits interferon (IFN)-induced host STAT1 phosphorylation and nuclear translocation, thereby preventing the establishment of cellular antiviral state by blocking the IFN-alpha/beta pathway. Inhibits STAT2 translocation in the nucleus after IFN-alpha treatment. Replicates the viral (+) and (-) RNA genome. Performs the capping of genomes in the cytoplasm. NS5 methylates viral RNA cap at guanine N-7 and ribose 2'-O positions. Besides its role in RNA genome replication, also prevents the establishment of cellular antiviral state by blocking the interferon-alpha/beta (IFN-alpha/beta) signaling pathway. Inhibits host TYK2 and STAT2 phosphorylation, thereby preventing activation of JAK-STAT signaling pathway. The protein is Genome polyprotein of Japanese encephalitis virus (strain SA-14) (JEV).